The chain runs to 119 residues: MHFKRGSEGHSLPLPCMHRSMQDISQHLKQWPRFVLQAGFYWPTTFKDAHGFVSSCDACQRKGNFTKRNEMPQHFILEVEVFDVWGIYFMKKTIFSWKPIHPNGGRLCLKMGGSSCEPH.

The protein localises to the mitochondrion. This is an uncharacterized protein from Arabidopsis thaliana (Mouse-ear cress).